The following is an 880-amino-acid chain: MOG interacting and ectopic P-granules protein 1 (880 aa).

Positions 1–20 are enriched in polar residues; the sequence is MVTSDETVLATTTNKTSITT. 3 disordered regions span residues 1–37, 82–257, and 350–370; these read MVTS…SETD, DKVE…DDNE, and ERPK…QHNP. A compositionally biased stretch (basic and acidic residues) spans 23–37; that stretch reads MEPKSSDESTDSETD. Over residues 87-105 the composition is skewed to polar residues; sequence ATNSVVDLSSNGSSATTSV. The segment covering 108–120 has biased composition (acidic residues); the sequence is EEQEEKANEDETN. Basic and acidic residues-rich tracts occupy residues 154–170 and 183–193; these read SKSD…IKDS and KPEEKEEKNDT. Acidic residues predominate over residues 215-224; sequence QLDDDDDDIQ. Composition is skewed to basic and acidic residues over residues 235–252 and 350–364; these read QKTE…KAEP and ERPK…ERQQ. C2H2-type zinc fingers lie at residues 436–459 and 465–488; these read SRCG…ETLH and FQCT…FEAH. The CCHC-type zinc finger occupies 501-523; sequence YPCAICEEDFNFKGVREQHYKQC. 4 consecutive C2H2-type zinc fingers follow at residues 728–751, 768–791, 809–830, and 841–864; these read FQCE…QVLH, LACS…VMSH, GRCK…VADH, and YSCD…SSTH.

In terms of assembly, interacts with hda-1, let-418, lin-1, mog-1, mog-4, mog-5, mog-6, pie-1 and unc-98.

It localises to the nucleus. Has a broad role in development, specifically in the genetic pathway SynMuvB that negatively regulates specification of the vulval cell fate. Required for fem-3 3'-UTR-mediated repression in the regulation of the sperm/oocyte switch. Acts by regulating the translation of fem-3 mRNA, by binding to its 3'-UTR. The polypeptide is MOG interacting and ectopic P-granules protein 1 (Caenorhabditis briggsae).